Consider the following 787-residue polypeptide: Signal transducer and activator of transcription 5B (787 aa).

Tyrosine 90 is modified (phosphotyrosine). Phosphoserine occurs at positions 128 and 193. The required for interaction with NMI stretch occupies residues 232–321; sequence KHQKTLQLLR…MLAEVNATIT (90 aa). The 98-residue stretch at 589-686 folds into the SH2 domain; that stretch reads WNDGAILGFV…EVYSKYYTPV (98 aa). Tyrosine 682 is subject to Phosphotyrosine. Residue tyrosine 699 is modified to Phosphotyrosine; by HCK, JAK and PTK6.

Belongs to the transcription factor STAT family. In terms of assembly, upon activation, forms homodimers. Forms also heterodimers with related family members. Binds NR3C1. Interacts with NCOA1. Interacts with NMI. Interacts with SOCS7. Interacts (via SH2 domain) with INSR. Interacts with CPEB3; this inhibits STAT5B-mediated transcriptional activation. Post-translationally, tyrosine phosphorylated in response to signaling via activated KIT, resulting in translocation to the nucleus. Tyrosine phosphorylated in response to signaling via activated FLT3; wild-type FLT3 results in much weaker phosphorylation than constitutively activated mutant FLT3. Alternatively, can be phosphorylated by JAK2. Phosphorylation at Tyr-699 by PTK6 or HCK leads to an increase of its transcriptional activity.

It is found in the cytoplasm. It localises to the nucleus. Functionally, carries out a dual function: signal transduction and activation of transcription. Mediates cellular responses to the cytokine KITLG/SCF and other growth factors. Binds to the GAS element and activates PRL-induced transcription. Positively regulates hematopoietic/erythroid differentiation. The polypeptide is Signal transducer and activator of transcription 5B (STAT5B) (Homo sapiens (Human)).